The sequence spans 310 residues: MKVAVIGAAGGIGQALALLLKNRLPAGSDLALYDIAPVTPGVAADLSHIPTPVSIKGYAGEDPTPALEGADVVLISAGVARKPGMDRADLFNVNAGIVKSLAERIAVVCPNACIGIITNPVNTTVPIAAEVLKKAGVYDKRKLFGVTTLDVIRSETFVAELKGQDPGEVRVPVIGGHSGVTILPLLSQVEGVEFSDEEIAALTKRIQNAGTEVVEAKAGGGSATLSMGQAACRFGLALVKALQGEEVIEYAYVEGNGEHASFFAQPVKLGKEGVEEILPYGELSDFEKAALDGMLETLNGDIQIGVDFVK.

NAD(+) contacts are provided by residues 7-13 and D34; that span reads GAAGGIG. Substrate contacts are provided by R81 and R87. NAD(+) contacts are provided by residues N94 and 117–119; that span reads ITN. Substrate-binding residues include N119 and R153. The active-site Proton acceptor is H177. An NAD(+)-binding site is contributed by M227.

Belongs to the LDH/MDH superfamily. MDH type 1 family. In terms of assembly, homodimer.

It catalyses the reaction (S)-malate + NAD(+) = oxaloacetate + NADH + H(+). In terms of biological role, catalyzes the reversible oxidation of malate to oxaloacetate. This chain is Malate dehydrogenase, found in Vibrio vulnificus (strain YJ016).